The following is a 389-amino-acid chain: NAD-dependent protein deacetylase sirtuin-2 (389 aa).

Residues 1-34 form a disordered region; it reads MAEPDPSHPLETQAGKVQEAQDSDSDSEGGAAGG. Ala2 carries the post-translational modification N-acetylalanine. 3 positions are modified to phosphoserine: Ser23, Ser25, and Ser27. The short motif at 41 to 51 is the Nuclear export signal element; that stretch reads LRNLFSQTLSL. Ser53 is modified (phosphoserine). The region spanning 57–338 is the Deacetylase sirtuin-type domain; that stretch reads RLLDELTLEG…LALAELLGWK (282 aa). Residues 85–89 and 95–97 contribute to the NAD(+) site; these read AGIST and DFR. Ser100 is modified (phosphoserine). An NAD(+)-binding site is contributed by 167–170; sequence QNID. The Proton acceptor role is filled by His187. Residues Cys195 and Cys200 each coordinate Zn(2+). Ser207 is modified (phosphoserine). Zn(2+)-binding residues include Cys221 and Cys224. Residues 262–263, 286–288, and Cys324 each bind NAD(+); these read TS and NKE. Residues 351–389 are disordered; it reads SIDAQSGAGVPNPSTSASPKKSPPPAKDEARTTEREKPQ. The span at 361–370 shows a compositional bias: low complexity; the sequence is PNPSTSASPK. The residue at position 368 (Ser368) is a Phosphoserine; by CDK2 and CDK5. Ser372 carries the phosphoserine modification. Basic and acidic residues predominate over residues 376–389; that stretch reads AKDEARTTEREKPQ.

It belongs to the sirtuin family. Class I subfamily. In terms of assembly, interacts with CDC20, FOXO3 and FZR1. Associates with microtubules in primary cortical mature neurons. Homotrimer. Isoform 1 and isoform 2 interact (via both phosphorylated, unphosphorylated, active or inactive forms) with HDAC6; the interaction is necessary for the complex to interact with alpha-tubulin, suggesting that these proteins belong to a large complex that deacetylates the cytoskeleton. Interacts with FOXO1; the interaction is disrupted upon serum-starvation or oxidative stress, leading to increased level of acetylated FOXO1 and induction of autophagy. Interacts with RELA; the interaction occurs in the cytoplasm and is increased in a TNF-alpha-dependent manner. Interacts with HOXA10; the interaction is direct. Interacts with YWHAB and YWHAG; the interactions occur in a AKT-dependent manner and increase SIRT2-dependent TP53 deacetylation. Interacts with MAPK1/ERK2 and MAPK3/ERK1; the interactions increase SIRT2 stability and deacetylation activity. Interacts (phosphorylated form) with KMT5A isoform 2; the interaction is direct, stimulates KMT5A-mediated methyltransferase activity on histone at 'Lys-20' (H4K20me1) and is increased in a H(2)O(2)-induced oxidative stress-dependent manner. Interacts with G6PD; the interaction is enhanced by H(2)O(2) treatment. Interacts with a G1/S-specific cyclin E-CDK2 complex. Interacts with AURKA, CDK5R1 (p35 form) and CDK5 and HIF1A. Isoform 1, isoform 2 and isoform 5 interact (via C-terminus region) with EP300. Interacts with the tRNA ligase SARS1; recruited to the VEGFA promoter via interaction with SARS1. Interacts with BEX4; negatively regulates alpha-tubulin deacetylation by SIRT2. Zn(2+) is required as a cofactor. In terms of processing, phosphorylated at phosphoserine and phosphothreonine. Phosphorylated at Ser-368 by a mitotic kinase CDK1/cyclin B at the G2/M transition; phosphorylation regulates the delay in cell-cycle progression. Phosphorylated at Ser-368 by a mitotic kinase G1/S-specific cyclin E/Cdk2 complex; phosphorylation inactivates SIRT2-mediated alpha-tubulin deacetylation and thereby negatively regulates cell adhesion, cell migration and neurite outgrowth during neuronal differentiation. Phosphorylated by cyclin A/Cdk2 and p35-Cdk5 complexes and to a lesser extent by the cyclin D3/Cdk4 and cyclin B/Cdk1, in vitro. Dephosphorylated at Ser-368 by CDC14A and CDC14B around early anaphase. Post-translationally, acetylated by EP300; acetylation leads both to the decreased of SIRT2-mediated alpha-tubulin deacetylase activity and SIRT2-mediated down-regulation of TP53 transcriptional activity. Ubiquitinated. Isoform 1 is expressed in heart, liver and skeletal muscle, weakly expressed in the cortex. Isoform 2 is strongly expressed in the cortex, weakly expressed in heart and liver. Weakly expressed in several malignancies including breast, liver, brain, kidney and prostate cancers compared to normal tissues. Weakly expressed in glioma cell lines compared to normal brain tissues (at protein level). Widely expressed. Highly expressed in heart, brain and skeletal muscle, while it is weakly expressed in placenta and lung. Down-regulated in many gliomas suggesting that it may act as a tumor suppressor gene in human gliomas possibly through the regulation of microtubule network.

It localises to the nucleus. It is found in the cytoplasm. Its subcellular location is the perinuclear region. The protein localises to the cytoskeleton. The protein resides in the microtubule organizing center. It localises to the centrosome. It is found in the centriole. Its subcellular location is the spindle. The protein localises to the midbody. The protein resides in the chromosome. It localises to the perikaryon. It is found in the cell projection. Its subcellular location is the growth cone. The protein localises to the myelin membrane. The catalysed reaction is N(6)-acetyl-L-lysyl-[protein] + NAD(+) + H2O = 2''-O-acetyl-ADP-D-ribose + nicotinamide + L-lysyl-[protein]. It catalyses the reaction N(6)-tetradecanoyl-L-lysyl-[protein] + NAD(+) + H2O = 2''-O-tetradecanoyl-ADP-D-ribose + nicotinamide + L-lysyl-[protein]. The enzyme catalyses N(6)-hexadecanoyl-L-lysyl-[protein] + NAD(+) + H2O = 2''-O-hexadecanoyl-ADP-D-ribose + nicotinamide + L-lysyl-[protein]. Its activity is regulated as follows. Inhibited by Sirtinol, A3 and M15 small molecules. Inhibited by nicotinamide. Inhibited by a macrocyclic peptide inhibitor S2iL5. Inhibited by EP300-induced acetylation. In terms of biological role, NAD-dependent protein deacetylase, which deacetylates internal lysines on histone and alpha-tubulin as well as many other proteins such as key transcription factors. Participates in the modulation of multiple and diverse biological processes such as cell cycle control, genomic integrity, microtubule dynamics, cell differentiation, metabolic networks, and autophagy. Plays a major role in the control of cell cycle progression and genomic stability. Functions in the antephase checkpoint preventing precocious mitotic entry in response to microtubule stress agents, and hence allowing proper inheritance of chromosomes. Positively regulates the anaphase promoting complex/cyclosome (APC/C) ubiquitin ligase complex activity by deacetylating CDC20 and FZR1, then allowing progression through mitosis. Associates both with chromatin at transcriptional start sites (TSSs) and enhancers of active genes. Plays a role in cell cycle and chromatin compaction through epigenetic modulation of the regulation of histone H4 'Lys-20' methylation (H4K20me1) during early mitosis. Specifically deacetylates histone H4 at 'Lys-16' (H4K16ac) between the G2/M transition and metaphase enabling H4K20me1 deposition by KMT5A leading to ulterior levels of H4K20me2 and H4K20me3 deposition throughout cell cycle, and mitotic S-phase progression. Deacetylates KMT5A modulating KMT5A chromatin localization during the mitotic stress response. Also deacetylates histone H3 at 'Lys-57' (H3K56ac) during the mitotic G2/M transition. Upon bacterium Listeria monocytogenes infection, deacetylates 'Lys-18' of histone H3 in a receptor tyrosine kinase MET- and PI3K/Akt-dependent manner, thereby inhibiting transcriptional activity and promoting late stages of listeria infection. During oocyte meiosis progression, may deacetylate histone H4 at 'Lys-16' (H4K16ac) and alpha-tubulin, regulating spindle assembly and chromosome alignment by influencing microtubule dynamics and kinetochore function. Deacetylates histone H4 at 'Lys-16' (H4K16ac) at the VEGFA promoter and thereby contributes to regulate expression of VEGFA, a key regulator of angiogenesis. Deacetylates alpha-tubulin at 'Lys-40' and hence controls neuronal motility, oligodendroglial cell arbor projection processes and proliferation of non-neuronal cells. Phosphorylation at Ser-368 by a G1/S-specific cyclin E-CDK2 complex inactivates SIRT2-mediated alpha-tubulin deacetylation, negatively regulating cell adhesion, cell migration and neurite outgrowth during neuronal differentiation. Deacetylates PARD3 and participates in the regulation of Schwann cell peripheral myelination formation during early postnatal development and during postinjury remyelination. Involved in several cellular metabolic pathways. Plays a role in the regulation of blood glucose homeostasis by deacetylating and stabilizing phosphoenolpyruvate carboxykinase PCK1 activity in response to low nutrient availability. Acts as a key regulator in the pentose phosphate pathway (PPP) by deacetylating and activating the glucose-6-phosphate G6PD enzyme, and therefore, stimulates the production of cytosolic NADPH to counteract oxidative damage. Maintains energy homeostasis in response to nutrient deprivation as well as energy expenditure by inhibiting adipogenesis and promoting lipolysis. Attenuates adipocyte differentiation by deacetylating and promoting FOXO1 interaction to PPARG and subsequent repression of PPARG-dependent transcriptional activity. Plays a role in the regulation of lysosome-mediated degradation of protein aggregates by autophagy in neuronal cells. Deacetylates FOXO1 in response to oxidative stress or serum deprivation, thereby negatively regulating FOXO1-mediated autophagy. Deacetylates a broad range of transcription factors and co-regulators regulating target gene expression. Deacetylates transcriptional factor FOXO3 stimulating the ubiquitin ligase SCF(SKP2)-mediated FOXO3 ubiquitination and degradation. Deacetylates HIF1A and therefore promotes HIF1A degradation and inhibition of HIF1A transcriptional activity in tumor cells in response to hypoxia. Deacetylates RELA in the cytoplasm inhibiting NF-kappaB-dependent transcription activation upon TNF-alpha stimulation. Inhibits transcriptional activation by deacetylating p53/TP53 and EP300. Also deacetylates EIF5A. Functions as a negative regulator on oxidative stress-tolerance in response to anoxia-reoxygenation conditions. Plays a role as tumor suppressor. In addition to protein deacetylase activity, also has activity toward long-chain fatty acyl groups and mediates protein-lysine demyristoylation and depalmitoylation of target proteins, such as ARF6 and KRAS, thereby regulating their association with membranes. Functionally, deacetylates EP300, alpha-tubulin and histone H3 and H4. Lacks deacetylation activity, at least toward known SIRT2 targets. This is NAD-dependent protein deacetylase sirtuin-2 (SIRT2) from Homo sapiens (Human).